Consider the following 392-residue polypeptide: GPI alpha-1,4-mannosyltransferase I, catalytic subunit (392 aa).

The Cytoplasmic segment spans residues 1-4 (MEAR). The chain crosses the membrane as a helical span at residues 5-25 (VCVLFGAAALLRLLLLCVGVY). The Lumenal portion of the chain corresponds to 26–65 (QDQTLKLKYTDVDYHVFTDAARFITQGESPYRRSTFRYTP). Residues 66–86 (LLALLLVPNVYLSLLFGKLLF) form a helical membrane-spanning segment. The Cytoplasmic portion of the chain corresponds to 87-125 (GFCDLLSGLLMFRLLVLRGASHGSACVSCGLWLLNPLPM). Residues 126 to 148 (AVSTRGNAESVLAVLVLSTLLCL) form a helical membrane-spanning segment. Residues 149-156 (QLRKHTTA) lie on the Lumenal side of the membrane. Residues 157–177 (ALLFGLSVHMKIYPVTYALPI) form a helical membrane-spanning segment. Topologically, residues 178–198 (ALALTAAPARGRGVLLRFFSP) are cytoplasmic. The chain crosses the membrane as a helical span at residues 199–219 (ALLRFAAVSAAVFLSLGLIFY). Residues 220–261 (CRYGWEFLQEAYLYHLTRRDLRHNFSPFFYLQYVCAERCWSS) are Lumenal-facing. A helical transmembrane segment spans residues 262 to 282 (GLLPLLLLPQLLLLLLASAAF). Residues 283–302 (SSDLPFCCFLHTAVFVSFNR) lie on the Cytoplasmic side of the membrane. A helical membrane pass occupies residues 303 to 323 (VCTSQYFLWYLCLLPVVLPRL). The Lumenal segment spans residues 324–330 (RLRLGRG). A helical membrane pass occupies residues 331 to 351 (LLLLLLWLLLQGLWLAPAYLL). Residues 352-360 (EFQGWNSFS) lie on the Cytoplasmic side of the membrane. A helical transmembrane segment spans residues 361–381 (WIWAASLLFLLTNTFILAQII). Residues 382–392 (QHYRPHDRKAD) are Lumenal-facing.

The protein belongs to the PIGM family. As to quaternary structure, part of the glycosylphosphatidylinositol-mannosyltransferase I complex that is composed of PIGM and PIGX.

It localises to the endoplasmic reticulum membrane. Its pathway is glycolipid biosynthesis; glycosylphosphatidylinositol-anchor biosynthesis. Functionally, catalytic subunit of the glycosylphosphatidylinositol-mannosyltransferase I complex which catalyzes the transfer of the first mannose, via an alpha-1,4 bond from a dolichol-phosphate-mannose (Dol-P-Man) to the glucosaminyl acyl phosphatidylinositol (GlcN-(acyl)PI) intermediate to generate alpha-D-Man-(1-&gt;4)-alpha-D-GlcN-(1-&gt;6)-(1-radyl,2-acyl-sn-glycero-3-phospho)-2-acyl-inositol and participates in the sixth step of the glycosylphosphatidylinositol-anchor biosynthesis. The sequence is that of GPI alpha-1,4-mannosyltransferase I, catalytic subunit from Danio rerio (Zebrafish).